Reading from the N-terminus, the 618-residue chain is Chaperone protein DnaK (618 aa).

Position 175 is a phosphothreonine; by autocatalysis (Thr175). A disordered region spans residues 576 to 618 (SQNAEPGADGGANSGANPGGTTGNTDTKDDNVVDAEYKVDDDK). Over residues 583-597 (ADGGANSGANPGGTT) the composition is skewed to gly residues. A compositionally biased stretch (basic and acidic residues) spans 601 to 618 (DTKDDNVVDAEYKVDDDK).

The protein belongs to the heat shock protein 70 family.

Acts as a chaperone. The protein is Chaperone protein DnaK of Clostridium kluyveri (strain NBRC 12016).